A 732-amino-acid chain; its full sequence is MDAKTDDKAGKCPVAHGPAPRGNRDWWPEQLNLSMLHQRSPSADPLGKDFHYAEQFKTLDLKALKQDLTALMTESQDWWPADFGHYGGLFIRMAWHSAGTYRTTDGRGGAGAGQQRFAPLNSWPDNANLDKARRLLWPIKQKYGQKISWADLYVLAGNVALESMGFQTFGFAGGRADTWEPEELFWGPEGTWLGDERYSGERQLADPLGAVQMGLIYVNPEGPNGNPDPLGSAKDIRETFARMAMNDEETVALIAGGHTFGKTHGAGDPSLLGPEPEGGDVEDQGLGWKSKYGTGFGADAITGGPEVIWSQEPTKWSNHFFDNLFKFEWELTKSPAGAQQWVAKNAEPSVPDPFDPSKKRLPTMLTSDLALRFDPIYEKISRRFYENPDEFADAFARAWFKLTHRDMGPVARYLGPEVPKETLLWQDPIPPVDHELINDADVEALKAKILGSGLSVADLVSTAWNSASTFRGSDKRGGANGARIRLAPQKDWEVNQPEQLATVLQKLEAIGKEFGKKVSLADLIVLGGVAAIEKAAKDAGVAVKVPFSPGRMDASQEQTDAPSFAPLEPRADGFRNYINSKKHQFMKPEEALVDRAQLLTLTAPEMTVLVGGLRVLGANAGDSKHGVFTTKPGTLSNDFFVNLLTMATSWQPSGTEGIYEGRDRKSGEVKWTATRVDLIFGSHSQLRALAEVYAQADSKEKFVNDFVAAWTKVMNADRFDLIAEPVLLEAAE.

Residues 1–10 show a composition bias toward basic and acidic residues; that stretch reads MDAKTDDKAG. Residues 1–26 form a disordered region; that stretch reads MDAKTDDKAGKCPVAHGPAPRGNRDW. The tryptophyl-tyrosyl-methioninium (Trp-Tyr) (with M-243) cross-link spans 95–217; it reads WHSAGTYRTT…LGAVQMGLIY (123 aa). The Proton acceptor role is filled by histidine 96. The segment at residues 217–243 is a cross-link (tryptophyl-tyrosyl-methioninium (Tyr-Met) (with W-95)); that stretch reads YVNPEGPNGNPDPLGSAKDIRETFARM. Histidine 258 contacts heme b.

It belongs to the peroxidase family. Peroxidase/catalase subfamily. Homodimer or homotetramer. It depends on heme b as a cofactor. In terms of processing, formation of the three residue Trp-Tyr-Met cross-link is important for the catalase, but not the peroxidase activity of the enzyme.

It catalyses the reaction H2O2 + AH2 = A + 2 H2O. The enzyme catalyses 2 H2O2 = O2 + 2 H2O. Functionally, bifunctional enzyme with both catalase and broad-spectrum peroxidase activity. The polypeptide is Catalase-peroxidase (Rhodopseudomonas palustris (strain BisB18)).